Reading from the N-terminus, the 269-residue chain is Phosphate import ATP-binding protein PstB (269 aa).

The ABC transporter domain maps to 22 to 264 (AEVRDLNFYY…PVQQKTADYV (243 aa)). ATP is bound at residue 54 to 61 (GPSGCGKT).

The protein belongs to the ABC transporter superfamily. Phosphate importer (TC 3.A.1.7) family. In terms of assembly, the complex is composed of two ATP-binding proteins (PstB), two transmembrane proteins (PstC and PstA) and a solute-binding protein (PstS).

The protein localises to the cell inner membrane. It catalyses the reaction phosphate(out) + ATP + H2O = ADP + 2 phosphate(in) + H(+). In terms of biological role, part of the ABC transporter complex PstSACB involved in phosphate import. Responsible for energy coupling to the transport system. The chain is Phosphate import ATP-binding protein PstB from Thermosynechococcus vestitus (strain NIES-2133 / IAM M-273 / BP-1).